A 330-amino-acid chain; its full sequence is Ferredoxin--NADP reductase (330 aa).

7 residues coordinate FAD: Glu35, Gln43, Tyr48, Val90, Phe123, Asp285, and Thr326.

The protein belongs to the ferredoxin--NADP reductase type 2 family. As to quaternary structure, homodimer. It depends on FAD as a cofactor.

It carries out the reaction 2 reduced [2Fe-2S]-[ferredoxin] + NADP(+) + H(+) = 2 oxidized [2Fe-2S]-[ferredoxin] + NADPH. This is Ferredoxin--NADP reductase from Streptococcus pyogenes serotype M2 (strain MGAS10270).